A 207-amino-acid chain; its full sequence is Large ribosomal subunit protein uL4 (207 aa).

Residues 43–85 are disordered; it reads SRRQGTHDTKGRSEVRGGGRKPWKQKGTGRARQGSIRSPQWVG. The span at 47–59 shows a compositional bias: basic and acidic residues; it reads GTHDTKGRSEVRG. The span at 60-71 shows a compositional bias: basic residues; it reads GGRKPWKQKGTG.

The protein belongs to the universal ribosomal protein uL4 family. As to quaternary structure, part of the 50S ribosomal subunit.

In terms of biological role, one of the primary rRNA binding proteins, this protein initially binds near the 5'-end of the 23S rRNA. It is important during the early stages of 50S assembly. It makes multiple contacts with different domains of the 23S rRNA in the assembled 50S subunit and ribosome. Forms part of the polypeptide exit tunnel. This Exiguobacterium sibiricum (strain DSM 17290 / CCUG 55495 / CIP 109462 / JCM 13490 / 255-15) protein is Large ribosomal subunit protein uL4.